Consider the following 25-residue polypeptide: Neuromedin-U-25 (25 aa).

Asn-25 bears the Asparagine amide mark.

This sequence belongs to the NmU family.

It is found in the secreted. Stimulates uterine smooth muscle contraction and causes selective vasoconstriction. The protein is Neuromedin-U-25 (NMU) of Sus scrofa (Pig).